Here is a 142-residue protein sequence, read N- to C-terminus: Large ribosomal subunit protein uL13 (142 aa).

This sequence belongs to the universal ribosomal protein uL13 family. In terms of assembly, part of the 50S ribosomal subunit.

This protein is one of the early assembly proteins of the 50S ribosomal subunit, although it is not seen to bind rRNA by itself. It is important during the early stages of 50S assembly. The sequence is that of Large ribosomal subunit protein uL13 from Alcanivorax borkumensis (strain ATCC 700651 / DSM 11573 / NCIMB 13689 / SK2).